Here is a 1226-residue protein sequence, read N- to C-terminus: Methionine synthase (1226 aa).

Residues 6 to 326 (RAQIEAQLKQ…EHIRHMAMAV (321 aa)) enclose the Hcy-binding domain. Zn(2+) contacts are provided by C248, C311, and C312. Positions 357–618 (FVNVGERTNV…VPEKLREAVE (262 aa)) constitute a Pterin-binding domain. One can recognise a B12-binding N-terminal domain in the interval 651–745 (SALEWRTWSV…FINASKQVGS (95 aa)). Methylcob(III)alamin contacts are provided by residues E695, 757-761 (GDVHD), H760, S805, T809, and A861. The region spanning 747–882 (NGKILLATVK…SDELRPAFVE (136 aa)) is the B12-binding domain. Positions 898-1226 (KKPRTKPVTL…EKWLGPNING (329 aa)) constitute an AdoMet activation domain. Residues D948, R1136, and 1191 to 1192 (YF) contribute to the S-adenosyl-L-methionine site.

The protein belongs to the vitamin-B12 dependent methionine synthase family. Requires methylcob(III)alamin as cofactor. It depends on Zn(2+) as a cofactor.

It catalyses the reaction (6S)-5-methyl-5,6,7,8-tetrahydrofolate + L-homocysteine = (6S)-5,6,7,8-tetrahydrofolate + L-methionine. It participates in amino-acid biosynthesis; L-methionine biosynthesis via de novo pathway; L-methionine from L-homocysteine (MetH route): step 1/1. Catalyzes the transfer of a methyl group from methyl-cobalamin to homocysteine, yielding enzyme-bound cob(I)alamin and methionine. Subsequently, remethylates the cofactor using methyltetrahydrofolate. This Vibrio vulnificus (strain YJ016) protein is Methionine synthase (metH).